The primary structure comprises 780 residues: Striatin (780 aa).

Residues L53–K120 adopt a coiled-coil conformation. Residues F55–F63 form a caveolin-binding region. Residues E124–N150 form a disordered region. S137 is subject to Phosphoserine. The segment at Q149–L166 is calmodulin-binding. At T225 the chain carries Phosphothreonine. S227, S229, S245, and S259 each carry phosphoserine. Disordered stretches follow at residues D289–W310 and D365–E387. Residues N299–W310 show a composition bias toward basic and acidic residues. WD repeat units follow at residues S461 to K500, A514 to Y553, G567 to S606, N662 to S701, A704 to E743, and K750 to V780.

This sequence belongs to the WD repeat striatin family. In terms of assembly, part of the core of STRIPAK complexes composed of PP2A catalytic and scaffolding subunits, the striatins (PP2A regulatory subunits), the striatin-associated proteins MOB4, STRIP1 and STRIP2, PDCD10 and members of the STE20 kinases, such as STK24 and STK26. Interacts with CTTNBP2; this interaction may regulate dendritic spine distribution of STRN. Activation of glutamate receptors weakens the interaction with CTTNBP2. In terms of tissue distribution, preferentially expressed in brain.

It is found in the cytoplasm. It localises to the membrane. The protein resides in the cell projection. Its subcellular location is the dendritic spine. In terms of biological role, calmodulin-binding scaffolding protein which is the center of the striatin-interacting phosphatase and kinase (STRIPAK) complexes. STRIPAK complexes have critical roles in protein (de)phosphorylation and are regulators of multiple signaling pathways including Hippo, MAPK, nuclear receptor and cytoskeleton remodeling. Different types of STRIPAK complexes are involved in a variety of biological processes such as cell growth, differentiation, apoptosis, metabolism and immune regulation. In Homo sapiens (Human), this protein is Striatin (STRN).